The chain runs to 658 residues: Probable Xaa-Pro aminopeptidase P (658 aa).

The Mn(2+) site is built by aspartate 449, aspartate 460, glutamate 558, and glutamate 572.

The protein belongs to the peptidase M24B family. It depends on Mn(2+) as a cofactor.

The enzyme catalyses Release of any N-terminal amino acid, including proline, that is linked to proline, even from a dipeptide or tripeptide.. Its function is as follows. Catalyzes the removal of a penultimate prolyl residue from the N-termini of peptides. This is Probable Xaa-Pro aminopeptidase P (ampp) from Aspergillus clavatus (strain ATCC 1007 / CBS 513.65 / DSM 816 / NCTC 3887 / NRRL 1 / QM 1276 / 107).